The primary structure comprises 571 residues: WAP, Kazal, immunoglobulin, Kunitz and NTR domain-containing protein 2 (571 aa).

An N-terminal signal peptide occupies residues 1 to 29 (MCAPGYHRFWFHWGLLLLLLLEAPLRGLA). One can recognise a WAP domain in the interval 34 to 87 (RYSHAGICPNDMNPNLWVDAQSTCKRECETDQECETYEKCCPNVCGTKSCVAAR). Disulfide bonds link cysteine 41/cysteine 74, cysteine 57/cysteine 78, cysteine 61/cysteine 73, cysteine 67/cysteine 83, cysteine 129/cysteine 159, cysteine 133/cysteine 152, cysteine 141/cysteine 170, and cysteine 226/cysteine 282. The Kazal-like domain maps to 121-172 (WDGQPVCKCKDRCEKEPSFTCASDGLTYYNRCFMDAEACSKGITLSVVTCRY). The Ig-like C2-type domain maps to 205–298 (PALLNHPVHQ…GVLRADFPLS (94 aa)). Asparagine 314 carries an N-linked (GlcNAc...) asparagine glycan. Cystine bridges form between cysteine 323/cysteine 373, cysteine 332/cysteine 356, cysteine 348/cysteine 369, cysteine 381/cysteine 431, cysteine 390/cysteine 414, cysteine 406/cysteine 427, cysteine 440/cysteine 510, cysteine 443/cysteine 512, and cysteine 454/cysteine 561. 2 consecutive BPTI/Kunitz inhibitor domains span residues 323–373 (CLKP…MLAC) and 381–431 (CSLP…EESC). Positions 440–561 (CRACKPRQKL…LREVMYKKTC (122 aa)) constitute an NTR domain. Residue asparagine 514 is glycosylated (N-linked (GlcNAc...) asparagine).

The protein belongs to the WFIKKN family. As to quaternary structure, interacts with both mature and propeptide myostatin/MSTN. As to expression, widely expressed, with high expression in skeletal muscle and heart. Also expressed in brain, lung and testis. Weakly expressed in liver and kidney.

The protein resides in the secreted. Its function is as follows. Protease-inhibitor that contains multiple distinct protease inhibitor domains. Probably has serine protease- and metalloprotease-inhibitor activity. Inhibits the biological activity of mature myostatin, but not activin. This is WAP, Kazal, immunoglobulin, Kunitz and NTR domain-containing protein 2 (Wfikkn2) from Mus musculus (Mouse).